Consider the following 124-residue polypeptide: Small ribosomal subunit protein uS12 (124 aa).

Residues 1 to 28 are disordered; that stretch reads MPTISQLIGSERKRLTRKTKSPALKSCP. At Asp-89 the chain carries 3-methylthioaspartic acid. Residues 104–124 form a disordered region; that stretch reads TAGVKDRRQSRSKYGAKAPKD.

This sequence belongs to the universal ribosomal protein uS12 family. In terms of assembly, part of the 30S ribosomal subunit. Contacts proteins S8 and S17. May interact with IF1 in the 30S initiation complex.

In terms of biological role, with S4 and S5 plays an important role in translational accuracy. Functionally, interacts with and stabilizes bases of the 16S rRNA that are involved in tRNA selection in the A site and with the mRNA backbone. Located at the interface of the 30S and 50S subunits, it traverses the body of the 30S subunit contacting proteins on the other side and probably holding the rRNA structure together. The combined cluster of proteins S8, S12 and S17 appears to hold together the shoulder and platform of the 30S subunit. This chain is Small ribosomal subunit protein uS12, found in Prochlorococcus marinus (strain MIT 9312).